Reading from the N-terminus, the 131-residue chain is Amicyanin (131 aa).

A signal peptide spans 1–26; the sequence is MISATKIRSCLAACVLAAFGATGALA. The region spanning 27–131 is the Plastocyanin-like domain; it reads DKATIPSESP…PFMRGKVVVE (105 aa). H79, C118, H121, and M124 together coordinate Cu cation.

The cofactor is Cu cation.

The protein localises to the periplasm. It participates in one-carbon metabolism; methylamine degradation. In terms of biological role, primary acceptor of electrons from methylamine dehydrogenase. Passes those electrons on either a soluble cytochrome c or to pseudoazurin. This chain is Amicyanin (mauC), found in Paracoccus denitrificans.